The sequence spans 584 residues: ATP-dependent RNA helicase MRH4, mitochondrial (584 aa).

Residues 1 to 49 (MQPVFSRFPYASKSGFISLASRGYAVSRNSGSSIKSNLRSKPRADTRWN) constitute a mitochondrion transit peptide. Residues 28–39 (RNSGSSIKSNLR) show a composition bias toward polar residues. Positions 28-92 (RNSGSSIKSN…QTQQQFQYGE (65 aa)) are disordered. The segment covering 63–79 (GKGDHRSHSRSDSRAKP) has biased composition (basic and acidic residues). The Q motif signature appears at 162 to 169 (HLKPSPIQ). Residues 179 to 366 (TLMDPQLQVR…TRLFPTVGVI (188 aa)) form the Helicase ATP-binding domain. 192–199 (AETGSGKT) provides a ligand contact to ATP. The DEAD box signature appears at 314–317 (DEAD). One can recognise a Helicase C-terminal domain in the interval 397–584 (ALAQILYSIN…SIVSKNVSIS (188 aa)).

The protein belongs to the DEAD box helicase family. MRH4 subfamily.

It localises to the mitochondrion. The catalysed reaction is ATP + H2O = ADP + phosphate + H(+). Functionally, ATP-binding RNA helicase involved in mitochondrial RNA metabolism. Required for maintenance of mitochondrial DNA. In Kluyveromyces lactis (strain ATCC 8585 / CBS 2359 / DSM 70799 / NBRC 1267 / NRRL Y-1140 / WM37) (Yeast), this protein is ATP-dependent RNA helicase MRH4, mitochondrial (MRH4).